A 605-amino-acid chain; its full sequence is Adaptin medium chain homolog APM2 (605 aa).

Positions 150–196 (EEWSPGEESSSSSGSDSDSEYSNTNKRKDKKKKRKKKKGTKGKSVGK) are disordered. Low complexity predominate over residues 155-171 (GEESSSSSGSDSDSEYS). The segment covering 174–196 (NKRKDKKKKRKKKKGTKGKSVGK) has biased composition (basic residues). Residues 269–604 (KNEFFLDVIE…TVSDEEYAYI (336 aa)) form the MHD domain.

This sequence belongs to the adaptor complexes medium subunit family. In terms of assembly, component of the AP-1R complex composed of at least APM2, APL4 and APS1. Interacts with MIL1. Interacts with APL2.

It localises to the golgi apparatus membrane. Its subcellular location is the early endosome membrane. It is found in the cytoplasmic vesicle. The protein resides in the clathrin-coated vesicle membrane. Component of the AP-1-related (AP-1R) complex, an adapter protein complex that mediates of cargo protein sorting in clathrin-coated vesicles. AP-1R has a specific role in SNARE SNC1 sorting. In contrast to the APM1-containing AP-1 complex, AP-1R is incapable of sorting CHS3. This Saccharomyces cerevisiae (strain ATCC 204508 / S288c) (Baker's yeast) protein is Adaptin medium chain homolog APM2 (APM2).